The sequence spans 175 residues: Co-chaperone protein HscB homolog (175 aa).

A J domain is found at 7–79; it reads SHFDLFHLPA…LKRATYLLSL (73 aa).

This sequence belongs to the HscB family. As to quaternary structure, interacts with HscA and stimulates its ATPase activity.

Its function is as follows. Co-chaperone involved in the maturation of iron-sulfur cluster-containing proteins. Seems to help targeting proteins to be folded toward HscA. The protein is Co-chaperone protein HscB homolog of Burkholderia multivorans (strain ATCC 17616 / 249).